A 392-amino-acid chain; its full sequence is Putative pectate lyase 21 (392 aa).

An N-terminal signal peptide occupies residues 1-21 (MSIVCTFFLFLLNTSFAFAFA). N38 is a glycosylation site (N-linked (GlcNAc...) asparagine). Residues D189, D213, and D217 each contribute to the Ca(2+) site. A glycan (N-linked (GlcNAc...) asparagine) is linked at N220. R269 is an active-site residue.

It belongs to the polysaccharide lyase 1 family. Ca(2+) is required as a cofactor.

It carries out the reaction Eliminative cleavage of (1-&gt;4)-alpha-D-galacturonan to give oligosaccharides with 4-deoxy-alpha-D-galact-4-enuronosyl groups at their non-reducing ends.. The protein operates within glycan metabolism; pectin degradation; 2-dehydro-3-deoxy-D-gluconate from pectin: step 2/5. The chain is Putative pectate lyase 21 from Arabidopsis thaliana (Mouse-ear cress).